The following is a 1175-amino-acid chain: Potassium/sodium hyperpolarization-activated cyclic nucleotide-gated channel 4 (1175 aa).

The Cytoplasmic portion of the chain corresponds to 1 to 259; the sequence is MDKLPPSMRK…SAGFWIIHPY (259 aa). A disordered region spans residues 17–186; that stretch reads QQVGAKAWIM…SSCGEQRPAD (170 aa). Positions 26 to 36 are enriched in acidic residues; the sequence is MDEEEDAEEEG. Low complexity predominate over residues 60–75; it reads PSAAAAAAGGAESRGA. Positions 111–126 are enriched in gly residues; sequence SRGGGGGGGSTGGGSH. Basic and acidic residues predominate over residues 128–140; it reads HLHDSAEERRLIA. Serine 145 carries the post-translational modification Phosphoserine. Positions 162 to 175 are enriched in pro residues; that stretch reads PGAPAPPAASPPQV. The helical transmembrane segment at 260 to 288 threads the bilayer; sequence SDFRFYWDLTMLLLMVGNLIIIPVGITFF. Residues 289–292 are Extracellular-facing; that stretch reads KDEN. A helical membrane pass occupies residues 293 to 316; sequence TTPWIVFNVVSDTFFLIDLVLNFR. At 317–329 the chain is on the cytoplasmic side; it reads TGIVVEDNTDIIL. A helical transmembrane segment spans residues 330–352; it reads DPRRIKMKYLKSWFVVDFVSSIP. The Extracellular segment spans residues 353-374; it reads VDYIFLIVETRIDSEVYKTARA. The chain crosses the membrane as a helical; Voltage-sensor span at residues 375-410; it reads LRIVRFTKILSLLRLLRLSRLIRYIHQWEEIFHMTY. The Cytoplasmic segment spans residues 411 to 413; that stretch reads DLA. A helical transmembrane segment spans residues 414 to 444; the sequence is SAVVRIVNLIGMMLLLCHWDGCLQFLVPMLQ. At 445-449 the chain is on the extracellular side; the sequence is DFPDD. Positions 450-478 form an intramembrane region, pore-forming; that stretch reads CWVSLNNMVNNSWGKQYSYALFKAMSHML. Residues 479–488 lie on the Extracellular side of the membrane; the sequence is CIGYGRQAPM. The chain crosses the membrane as a helical span at residues 489 to 521; sequence GMSDVWLTMLSMIVGATCYAMFIGHATALIQSL. Topologically, residues 522–1175 are cytoplasmic; the sequence is DSSRRQYQEK…PVRSKLPSNL (654 aa). Positions 560, 563, 565, and 567 each coordinate 3',5'-cyclic GMP. Glycine 660, glutamate 661, cysteine 663, arginine 670, threonine 671, valine 674, and arginine 711 together coordinate 3',5'-cyclic AMP. 2 disordered regions span residues 801-820 and 830-1175; these read AIFRPPPGPTTLGSLGAGQT and LAPS…PSNL. Low complexity-rich tracts occupy residues 839–854, 900–912, 948–966, and 984–1004; these read SPASSPSQPDTPSSAS, LGGSLSSSDSPLL, SPTSSPGQLGQPPGELSPG, and RLPFAAGASAGASPVAFSPRG. A compositionally biased stretch (pro residues) spans 1038 to 1050; it reads ASSPPPPPPPPAP. A phosphoserine mark is found at serine 1089 and serine 1093. Positions 1102–1114 are enriched in pro residues; that stretch reads PPFPRAPGRPPGA.

The protein belongs to the potassium channel HCN family. Homotetramer. The channel is composed of a homo- or heterotetrameric complex of pore-forming subunits. Interacts with PEX5L with a 4:4 HCN4:PEX5L stoichiometry; reduces the effects of cAMP on the voltage-dependence and rate of activation. Interacts with IRAG1; regulates HCN4 channel activity. Interacts with IRAG2; regulates HCN4 channel activity. In terms of processing, S-palmitoylated. As to expression, highly expressed in the heart sinoatrial node (SAN). Not detected in atrium, ventricle, forebrain or cerebellum. Detected at very low levels in total brain.

The protein localises to the cell membrane. The catalysed reaction is K(+)(in) = K(+)(out). The enzyme catalyses Na(+)(in) = Na(+)(out). Activated by cAMP and to a lesser extent by cGMP and cCMP. cAMP binding causes a conformation change that leads to the assembly of an active tetramer and channel opening by shifting the voltage-dependency towards more positive voltages. Binding of cAMP removes a tonic inhibition conferred by cyclic nucleotide-binding domain (CNBD) on channel opening. Cyclic dinucleotides can modulate HCN4 channel; cyclic dinucleotides acting as potent antagonists of cAMP. Inhibited by extracellular Cs(+) ions. Auxiliary subunits can also regulate HCN4 channel. IRAG1 causes a gain-of-function by shifting HCN4 activation to more depolarized membrane potentials in the absence of cAMP. In contrast, IRAG2 causes a loss-of-function by inhibiting cAMP-dependent potentiation of HCN4 activation. Hyperpolarization-activated ion channel that are permeable to Na(+) and K(+) ions with very slow activation and inactivation. Exhibits higher selectivity for K(+) over Na(+) ions. Contributes to the native pacemaker currents in heart (If) that regulate the rhythm of heart beat. Contributes to the native pacemaker currents in neurons (Ih). May mediate responses to sour stimuli. This is Potassium/sodium hyperpolarization-activated cyclic nucleotide-gated channel 4 (HCN4) from Oryctolagus cuniculus (Rabbit).